A 157-amino-acid polypeptide reads, in one-letter code: Crossover junction endodeoxyribonuclease RuvC (157 aa).

Active-site residues include aspartate 7, glutamate 67, and aspartate 139. Residues aspartate 7, glutamate 67, and aspartate 139 each contribute to the Mg(2+) site.

The protein belongs to the RuvC family. As to quaternary structure, homodimer which binds Holliday junction (HJ) DNA. The HJ becomes 2-fold symmetrical on binding to RuvC with unstacked arms; it has a different conformation from HJ DNA in complex with RuvA. In the full resolvosome a probable DNA-RuvA(4)-RuvB(12)-RuvC(2) complex forms which resolves the HJ. It depends on Mg(2+) as a cofactor.

The protein localises to the cytoplasm. It carries out the reaction Endonucleolytic cleavage at a junction such as a reciprocal single-stranded crossover between two homologous DNA duplexes (Holliday junction).. Functionally, the RuvA-RuvB-RuvC complex processes Holliday junction (HJ) DNA during genetic recombination and DNA repair. Endonuclease that resolves HJ intermediates. Cleaves cruciform DNA by making single-stranded nicks across the HJ at symmetrical positions within the homologous arms, yielding a 5'-phosphate and a 3'-hydroxyl group; requires a central core of homology in the junction. The consensus cleavage sequence is 5'-(A/T)TT(C/G)-3'. Cleavage occurs on the 3'-side of the TT dinucleotide at the point of strand exchange. HJ branch migration catalyzed by RuvA-RuvB allows RuvC to scan DNA until it finds its consensus sequence, where it cleaves and resolves the cruciform DNA. The chain is Crossover junction endodeoxyribonuclease RuvC from Prochlorococcus marinus subsp. pastoris (strain CCMP1986 / NIES-2087 / MED4).